A 378-amino-acid chain; its full sequence is Homoserine O-acetyltransferase (378 aa).

In terms of domain architecture, AB hydrolase-1 spans 52 to 337 (NAILICHALT…YSQHGHDTFL (286 aa)). Ser148 functions as the Nucleophile in the catalytic mechanism. Arg217 contacts substrate. Residues Asp304 and His333 contribute to the active site. Asp334 contacts substrate.

This sequence belongs to the AB hydrolase superfamily. MetX family. In terms of assembly, homodimer.

It is found in the cytoplasm. The enzyme catalyses L-homoserine + acetyl-CoA = O-acetyl-L-homoserine + CoA. The protein operates within amino-acid biosynthesis; L-methionine biosynthesis via de novo pathway; O-acetyl-L-homoserine from L-homoserine: step 1/1. Transfers an acetyl group from acetyl-CoA to L-homoserine, forming acetyl-L-homoserine. The sequence is that of Homoserine O-acetyltransferase from Chloroherpeton thalassium (strain ATCC 35110 / GB-78).